A 510-amino-acid chain; its full sequence is GMP synthase [glutamine-hydrolyzing] (510 aa).

The Glutamine amidotransferase type-1 domain maps to 5 to 195 (TVVVLDFGGQ…LFEICGLRGD (191 aa)). The active-site Nucleophile is C82. Active-site residues include H169 and E171. One can recognise a GMPS ATP-PPase domain in the interval 196–385 (WDLSDFISEA…LGIPAEILWR (190 aa)). 223–229 (SGGVDSS) contributes to the ATP binding site.

In terms of assembly, homodimer.

The catalysed reaction is XMP + L-glutamine + ATP + H2O = GMP + L-glutamate + AMP + diphosphate + 2 H(+). It participates in purine metabolism; GMP biosynthesis; GMP from XMP (L-Gln route): step 1/1. Functionally, catalyzes the synthesis of GMP from XMP. The polypeptide is GMP synthase [glutamine-hydrolyzing] (Syntrophomonas wolfei subsp. wolfei (strain DSM 2245B / Goettingen)).